We begin with the raw amino-acid sequence, 168 residues long: Endoribonuclease YbeY (168 aa).

3 residues coordinate Zn(2+): H123, H127, and H133.

This sequence belongs to the endoribonuclease YbeY family. The cofactor is Zn(2+).

The protein resides in the cytoplasm. Single strand-specific metallo-endoribonuclease involved in late-stage 70S ribosome quality control and in maturation of the 3' terminus of the 16S rRNA. This Francisella tularensis subsp. holarctica (strain LVS) protein is Endoribonuclease YbeY.